A 142-amino-acid chain; its full sequence is Nucleoside diphosphate kinase (142 aa).

ATP contacts are provided by Lys11, Phe59, Arg87, Thr93, Arg104, and Asn114. His117 acts as the Pros-phosphohistidine intermediate in catalysis.

The protein belongs to the NDK family. In terms of assembly, homotetramer. It depends on Mg(2+) as a cofactor.

It localises to the cytoplasm. The enzyme catalyses a 2'-deoxyribonucleoside 5'-diphosphate + ATP = a 2'-deoxyribonucleoside 5'-triphosphate + ADP. The catalysed reaction is a ribonucleoside 5'-diphosphate + ATP = a ribonucleoside 5'-triphosphate + ADP. Major role in the synthesis of nucleoside triphosphates other than ATP. The ATP gamma phosphate is transferred to the NDP beta phosphate via a ping-pong mechanism, using a phosphorylated active-site intermediate. This chain is Nucleoside diphosphate kinase, found in Pectobacterium carotovorum subsp. carotovorum (strain PC1).